A 390-amino-acid polypeptide reads, in one-letter code: L-seryl-tRNA(Sec) selenium transferase (390 aa).

Lysine 225 carries the N6-(pyridoxal phosphate)lysine modification.

Belongs to the SelA family. Pyridoxal 5'-phosphate serves as cofactor.

The protein resides in the cytoplasm. It catalyses the reaction L-seryl-tRNA(Sec) + selenophosphate + H(+) = L-selenocysteinyl-tRNA(Sec) + phosphate. It participates in aminoacyl-tRNA biosynthesis; selenocysteinyl-tRNA(Sec) biosynthesis; selenocysteinyl-tRNA(Sec) from L-seryl-tRNA(Sec) (bacterial route): step 1/1. Its function is as follows. Converts seryl-tRNA(Sec) to selenocysteinyl-tRNA(Sec) required for selenoprotein biosynthesis. In Helicobacter pylori (strain P12), this protein is L-seryl-tRNA(Sec) selenium transferase.